The primary structure comprises 228 residues: Odorant-binding protein 47 (228 aa).

6 disulfides stabilise this stretch: Cys-60/Cys-225, Cys-73/Cys-215, Cys-74/Cys-204, Cys-88/Cys-114, Cys-110/Cys-185, and Cys-158/Cys-195. Asn-117 carries N-linked (GlcNAc...) asparagine glycosylation.

The protein belongs to the PBP/GOBP family. In terms of processing, glycosylated. As to expression, head without antennae (at protein level).

The protein resides in the secreted. Present in the aqueous fluid surrounding olfactory sensory dendrites and are thought to aid in the capture and transport of hydrophobic odorants into and through this fluid. Binds N-phenyl-1-naphthylamine, menthol, citronellal, 1-dodecanol, decanal, p-tert-butylbenzophenone, 4-hydroxy-4'-isopropylazobenzene, 2-pyrrolyl-p-methyl-azobenzene and indole. Expressed in mosquito head but barely detectable in antennae, which suggests that it may be present in mouth structures, such as palpi and proboscis, and may have a function in taste. In Anopheles gambiae (African malaria mosquito), this protein is Odorant-binding protein 47.